A 591-amino-acid polypeptide reads, in one-letter code: MNQGKIITVSGPLVVASGMQEANIQDICRVGHLGLVGEIIEMRRDQASIQVYEETSGIGPGEPVVTTGCPLSVELGPGLISEMFDGIQRPLDRFQKATDSDFLIRGVAIPSLDRKAKWAFIPKLSVGQEVVAGDILGTVQETAVIEHRIMVPYKVSGTLVAIHAGDFTVTDTVYEIKKEDGSIYQGSLMQTWPVRQSRPVAQKLIPVEPLVTGQRVIDTFFPVTKGGAAAVPGPFGAGKTVVQHQIAKFANVDIVIYVGCGERGNEMTDVLNEFPELIDPNTGQSIMERTVLIANTSNMPVAAREASIYTGITIAEYFRDMGYSVAIMADSTSRWAEALREMSGRLQEMPGDEGYPAYLGSRIAEYYERAGRVRTLGSQEREGTITAIGAVSPPGGDISEPVTQNTLRIVKVFWGLDAPLAQRRHFPAINWLTSYSLYQDDVGSYIDRKQQSNWSNKVTRAMAILQREASLEEIVRLVGLDSLSEQDRLTMAVARQIREDYLQQNAFDSVDTFTSFPKQEAMLTNILTFNEEASKALSLGAYFNEIMEGTAQVRDRIARSKFIPEENLEQIKGLTQKVTKEIHHVLAKGGI.

233-240 contacts ATP; sequence GPFGAGKT.

Belongs to the ATPase alpha/beta chains family.

The enzyme catalyses ATP + H2O + 4 H(+)(in) = ADP + phosphate + 5 H(+)(out). Functionally, produces ATP from ADP in the presence of a proton gradient across the membrane. The V-type alpha chain is a catalytic subunit. In Streptococcus pyogenes serotype M28 (strain MGAS6180), this protein is V-type ATP synthase alpha chain.